The sequence spans 461 residues: GTPase Der (461 aa).

EngA-type G domains lie at 3–167 (PQVI…GEKQ) and 190–371 (LKLA…AAWS). GTP-binding positions include 9–16 (GRPNVGKS), 56–60 (DTAGW), 119–122 (NKAE), 196–203 (GRPNAGKS), 249–253 (DTAGM), and 314–317 (NKWD). Residues 372 to 456 (KRVPTAALNR…PIRLTLRSPK (85 aa)) form the KH-like domain.

This sequence belongs to the TRAFAC class TrmE-Era-EngA-EngB-Septin-like GTPase superfamily. EngA (Der) GTPase family. In terms of assembly, associates with the 50S ribosomal subunit.

Functionally, GTPase that plays an essential role in the late steps of ribosome biogenesis. The chain is GTPase Der from Novosphingobium aromaticivorans (strain ATCC 700278 / DSM 12444 / CCUG 56034 / CIP 105152 / NBRC 16084 / F199).